We begin with the raw amino-acid sequence, 213 residues long: Regulatory protein RecX (213 aa).

It belongs to the RecX family.

The protein localises to the cytoplasm. In terms of biological role, modulates RecA activity. The chain is Regulatory protein RecX from Clostridium beijerinckii (strain ATCC 51743 / NCIMB 8052) (Clostridium acetobutylicum).